Here is a 217-residue protein sequence, read N- to C-terminus: Small ribosomal subunit protein uS3 (217 aa).

The KH type-2 domain maps to Ile-24–Ser-93.

It belongs to the universal ribosomal protein uS3 family. Part of the 30S ribosomal subunit.

Its function is as follows. Binds the lower part of the 30S subunit head. In Pyrobaculum islandicum (strain DSM 4184 / JCM 9189 / GEO3), this protein is Small ribosomal subunit protein uS3.